Reading from the N-terminus, the 757-residue chain is Catalase-peroxidase (757 aa).

The tract at residues Met1–Asn28 is disordered. Residues Ser17–Asn28 are compositionally biased toward polar residues. The tryptophyl-tyrosyl-methioninium (Trp-Tyr) (with M-273) cross-link spans Trp100 to Tyr247. His101 acts as the Proton acceptor in catalysis. The segment at residues Tyr247–Met273 is a cross-link (tryptophyl-tyrosyl-methioninium (Tyr-Met) (with W-100)). His288 contacts heme b.

It belongs to the peroxidase family. Peroxidase/catalase subfamily. As to quaternary structure, homodimer or homotetramer. Heme b is required as a cofactor. Post-translationally, formation of the three residue Trp-Tyr-Met cross-link is important for the catalase, but not the peroxidase activity of the enzyme.

The catalysed reaction is H2O2 + AH2 = A + 2 H2O. It carries out the reaction 2 H2O2 = O2 + 2 H2O. In terms of biological role, bifunctional enzyme with both catalase and broad-spectrum peroxidase activity. The chain is Catalase-peroxidase from Flavobacterium johnsoniae (strain ATCC 17061 / DSM 2064 / JCM 8514 / BCRC 14874 / CCUG 350202 / NBRC 14942 / NCIMB 11054 / UW101) (Cytophaga johnsonae).